We begin with the raw amino-acid sequence, 367 residues long: Ribosomal lysine N-methyltransferase 5 (367 aa).

The tract at residues 55–74 (EGGRKKKRVRRRNKASSVEE) is disordered. The span at 58-68 (RKKKRVRRRNK) shows a compositional bias: basic residues. Residues W110, 170-172 (GAG), D192, W256, and M288 contribute to the S-adenosyl-L-methionine site.

Belongs to the class I-like SAM-binding methyltransferase superfamily. RKM5 family.

S-adenosyl-L-methionine-dependent protein-lysine N-methyltransferase that monomethylates 60S ribosomal protein L1 (RPL1A and RPL1B) at 'Lys-46'. This is Ribosomal lysine N-methyltransferase 5 (RKM5) from Saccharomyces cerevisiae (strain VIN 13) (Baker's yeast).